Consider the following 275-residue polypeptide: Large ribosomal subunit protein uL2 (275 aa).

The interval 224–275 (VMNPVDHPHGGGEGKSPIGRPSPVTPWGKPTLGYKTRKKNKASDKFIIKRRK) is disordered. Positions 264-275 (KASDKFIIKRRK) are enriched in basic and acidic residues.

The protein belongs to the universal ribosomal protein uL2 family. Part of the 50S ribosomal subunit. Forms a bridge to the 30S subunit in the 70S ribosome.

Its function is as follows. One of the primary rRNA binding proteins. Required for association of the 30S and 50S subunits to form the 70S ribosome, for tRNA binding and peptide bond formation. It has been suggested to have peptidyltransferase activity; this is somewhat controversial. Makes several contacts with the 16S rRNA in the 70S ribosome. The polypeptide is Large ribosomal subunit protein uL2 (Acetivibrio thermocellus (strain ATCC 27405 / DSM 1237 / JCM 9322 / NBRC 103400 / NCIMB 10682 / NRRL B-4536 / VPI 7372) (Clostridium thermocellum)).